A 292-amino-acid polypeptide reads, in one-letter code: Bifunctional protein FolD (292 aa).

NADP(+)-binding positions include 161–163 (GRS) and Ile231.

The protein belongs to the tetrahydrofolate dehydrogenase/cyclohydrolase family. As to quaternary structure, homodimer.

The enzyme catalyses (6R)-5,10-methylene-5,6,7,8-tetrahydrofolate + NADP(+) = (6R)-5,10-methenyltetrahydrofolate + NADPH. It carries out the reaction (6R)-5,10-methenyltetrahydrofolate + H2O = (6R)-10-formyltetrahydrofolate + H(+). It participates in one-carbon metabolism; tetrahydrofolate interconversion. Its function is as follows. Catalyzes the oxidation of 5,10-methylenetetrahydrofolate to 5,10-methenyltetrahydrofolate and then the hydrolysis of 5,10-methenyltetrahydrofolate to 10-formyltetrahydrofolate. The polypeptide is Bifunctional protein FolD (Protochlamydia amoebophila (strain UWE25)).